The chain runs to 406 residues: Formate-dependent phosphoribosylglycinamide formyltransferase (406 aa).

Residues 28 to 29 (EL) and Glu-88 contribute to the N(1)-(5-phospho-beta-D-ribosyl)glycinamide site. Residues Arg-121, Lys-162, 167–172 (SSGKGQ), 202–205 (EGFI), and Glu-210 each bind ATP. Positions 126–320 (RLAAEELGCA…EFELHAKAIL (195 aa)) constitute an ATP-grasp domain. Mg(2+) is bound by residues Glu-279 and Glu-291. Residues Asp-298, Lys-367, and 374–375 (RR) each bind N(1)-(5-phospho-beta-D-ribosyl)glycinamide.

This sequence belongs to the PurK/PurT family. Homodimer.

It catalyses the reaction N(1)-(5-phospho-beta-D-ribosyl)glycinamide + formate + ATP = N(2)-formyl-N(1)-(5-phospho-beta-D-ribosyl)glycinamide + ADP + phosphate + H(+). Its pathway is purine metabolism; IMP biosynthesis via de novo pathway; N(2)-formyl-N(1)-(5-phospho-D-ribosyl)glycinamide from N(1)-(5-phospho-D-ribosyl)glycinamide (formate route): step 1/1. Functionally, involved in the de novo purine biosynthesis. Catalyzes the transfer of formate to 5-phospho-ribosyl-glycinamide (GAR), producing 5-phospho-ribosyl-N-formylglycinamide (FGAR). Formate is provided by PurU via hydrolysis of 10-formyl-tetrahydrofolate. The protein is Formate-dependent phosphoribosylglycinamide formyltransferase of Janthinobacterium sp. (strain Marseille) (Minibacterium massiliensis).